Here is a 220-residue protein sequence, read N- to C-terminus: Ribose-5-phosphate isomerase A (220 aa).

Residues 28–31 (TGST), 81–84 (DGAD), and 94–97 (KGGG) contribute to the substrate site. Glu103 serves as the catalytic Proton acceptor. Lys121 contributes to the substrate binding site.

The protein belongs to the ribose 5-phosphate isomerase family. Homodimer.

It carries out the reaction aldehydo-D-ribose 5-phosphate = D-ribulose 5-phosphate. It functions in the pathway carbohydrate degradation; pentose phosphate pathway; D-ribose 5-phosphate from D-ribulose 5-phosphate (non-oxidative stage): step 1/1. Catalyzes the reversible conversion of ribose-5-phosphate to ribulose 5-phosphate. The protein is Ribose-5-phosphate isomerase A of Shewanella putrefaciens (strain CN-32 / ATCC BAA-453).